A 504-amino-acid chain; its full sequence is Alkylcitrate dehydratase phiI (504 aa).

The protein belongs to the PrpD family. In terms of assembly, monomer.

The catalysed reaction is (4E,11E)-2-hydroxytrideca-4,11-dien-1,2,3-tricarboxylate + 2 H(+) = [4-(deca-1,8-diyl)-2,5-dioxo-2,5-dihydro-3-furanyl]acetate + 2 H2O. Its pathway is secondary metabolite biosynthesis. Alkylcitrate dehydratase; part of the gene cluster that mediates the biosynthesis of the antihypercholesterolemic agents phomoidrides which are dimeric anhydrides. Within the pathway, the alkylcitrate synthase (ACS) phiJ and the alkylcitrate dehydratase (ACDH) phiI produce the decarboxylated monomeric anhydrides by coupling the C12-fatty acyl product from phiA with oxalacetic acid. The pathway begins with the highly reducing polyketide synthase phiA that catalyzes the formation of a C12-fatty acyl-ACP, starting from one acetate and 5 malonate units. The hydrolase phiM is involved in the release of the C12-fatty acyl chain from phiA. The alkylcitrate synthase (ACS) phiJ and the alkylcitrate dehydratase (ACDH) phiI then give rise to decarboxylated monomeric anhydrides by coupling the C12-fatty acyl chain with oxalacetic acid. The cyclase phiC is responsible for the dimerization of the monomeric anhydrides which leads to the production of prephomoidride that contains the characteristic bicyclo[4.3.1]deca-1,6-diene system of phomoidrides. Iterative oxidation catalyzed by the alpha-ketoglutarate-dependent dioxygenase phiK produced then phomoidride A. Finally, the methyltransferase phiE converts phomoidride A to phomoidride B via an acetalization reaction. The phosphatidylethanolamine-binding protein phiB and phiN are not essential for dimerization and their functions have still to be determined. The chain is Alkylcitrate dehydratase phiI from Fungal sp. (strain ATCC 74256).